A 563-amino-acid chain; its full sequence is DNA mismatch repair protein MutL (563 aa).

The protein belongs to the DNA mismatch repair MutL/HexB family.

In terms of biological role, this protein is involved in the repair of mismatches in DNA. It is required for dam-dependent methyl-directed DNA mismatch repair. May act as a 'molecular matchmaker', a protein that promotes the formation of a stable complex between two or more DNA-binding proteins in an ATP-dependent manner without itself being part of a final effector complex. This Trichormus variabilis (strain ATCC 29413 / PCC 7937) (Anabaena variabilis) protein is DNA mismatch repair protein MutL.